A 162-amino-acid chain; its full sequence is Phosphopantetheine adenylyltransferase (162 aa).

Residue Ser11 coordinates substrate. ATP contacts are provided by residues 11-12 (SF) and His19. Residues Lys43, Val76, and Arg90 each contribute to the substrate site. Residues 91-93 (GLR), Glu101, and 126-132 (HLYISSS) each bind ATP.

Belongs to the bacterial CoaD family. As to quaternary structure, homohexamer. Requires Mg(2+) as cofactor.

The protein localises to the cytoplasm. It catalyses the reaction (R)-4'-phosphopantetheine + ATP + H(+) = 3'-dephospho-CoA + diphosphate. It functions in the pathway cofactor biosynthesis; coenzyme A biosynthesis; CoA from (R)-pantothenate: step 4/5. In terms of biological role, reversibly transfers an adenylyl group from ATP to 4'-phosphopantetheine, yielding dephospho-CoA (dPCoA) and pyrophosphate. The polypeptide is Phosphopantetheine adenylyltransferase (Streptococcus pneumoniae (strain 70585)).